Reading from the N-terminus, the 933-residue chain is Clumping factor A (933 aa).

The N-terminal stretch at 1–39 (MNMKKKEKHAIRKKSIGVASVLVGTLIGFGLLSSKEADA) is a signal peptide. A YSIRK-G/S signaling motif motif is present at residues 9-20 (HAIRKKSIGVAS). 2 disordered regions span residues 34–200 (SKEA…SNKD) and 529–904 (FNNG…SEDE). The interval 40–542 (SENSVTQSDS…SGSGDGIDKP (503 aa)) is ligand binding A region. The segment covering 47-65 (SDSASNESKSNDSSSVSAA) has biased composition (low complexity). Residues 71–105 (TNVSDTKTSSNTNNGETSVAQNPAQQETTQSSSTN) show a composition bias toward polar residues. Positions 106 to 132 (ATTEETPVTGEATTTTTNQANTPATTQ) are enriched in low complexity. Positions 133–200 (SSNTNAEELV…PQSTDASNKD (68 aa)) are enriched in polar residues. The span at 547 to 565 (QPDEPGEIEPIPEDSDSDP) shows a compositional bias: acidic residues. Over residues 566–598 (GSDSGSDSNSDSGSDSGSDSTSDSGSDSASDSD) the composition is skewed to low complexity. A compositionally biased stretch (acidic residues) spans 599–861 (SASDSDSASD…DSDSESDSNS (263 aa)). Low complexity predominate over residues 862-880 (DSESGSNNNVVPPNSPKNG). Residues 887 to 896 (NEAKDSKEPL) show a composition bias toward basic and acidic residues. The LPXTG sorting signal signature appears at 896–900 (LPDTG). Thr899 carries the post-translational modification Pentaglycyl murein peptidoglycan amidated threonine. A propeptide spans 900-933 (GSEDEANTSLIWGLLASIGSLLLFRRKKENKDKK) (removed by sortase).

It belongs to the serine-aspartate repeat-containing protein (SDr) family.

The protein localises to the secreted. It localises to the cell wall. In terms of biological role, cell surface-associated protein implicated in virulence. Promotes bacterial attachment exclusively to the gamma-chain of human fibrinogen. Induces formation of bacterial clumps, which diminish the ability of group IIA phospholipase A2 to cause bacterial phospholipid hydrolysis and killing. Significantly decreases macrophage phagocytosis possibly thanks to the clumps, clumped bacteria being too large to be phagocytosed. Dominant factor responsible for human platelet aggregation, which may be an important mechanism for initiating infective endocarditis. Enhances spleen cell proliferative response in vitro, contributing significantly to the immunostimulatory activity of S.aureus. In Staphylococcus aureus (strain Newman), this protein is Clumping factor A (clfA).